We begin with the raw amino-acid sequence, 124 residues long: MATINQLVRKPRSMKVAKSNVPALDACPQKRGVCTRVYTTTPKKPNSALRKVCRVRLTNGFEVTSYIGGEGHNLQEHSVILIRGGRVKDLPGVRYHTVRGALDCSGVKDRKQGRSKYGVKKPKA.

The residue at position 89 (aspartate 89) is a 3-methylthioaspartic acid.

It belongs to the universal ribosomal protein uS12 family. As to quaternary structure, part of the 30S ribosomal subunit. Contacts proteins S8 and S17. May interact with IF1 in the 30S initiation complex.

With S4 and S5 plays an important role in translational accuracy. Its function is as follows. Interacts with and stabilizes bases of the 16S rRNA that are involved in tRNA selection in the A site and with the mRNA backbone. Located at the interface of the 30S and 50S subunits, it traverses the body of the 30S subunit contacting proteins on the other side and probably holding the rRNA structure together. The combined cluster of proteins S8, S12 and S17 appears to hold together the shoulder and platform of the 30S subunit. The protein is Small ribosomal subunit protein uS12 of Sodalis glossinidius (strain morsitans).